The following is a 246-amino-acid chain: E3 ubiquitin-protein ligase RNF182 (246 aa).

An RING-type zinc finger spans residues 22–70 (CKICYNRYNLRQRKPKVLGCCHRVCAKCLYKLVDCGESPQCVIVCPFCR). Transmembrane regions (helical) follow at residues 184-204 (VFVW…IYLL) and 211-231 (LGVV…IYGF).

Interacts with ATP6V0C.

Its subcellular location is the membrane. The protein resides in the cytoplasm. It carries out the reaction S-ubiquitinyl-[E2 ubiquitin-conjugating enzyme]-L-cysteine + [acceptor protein]-L-lysine = [E2 ubiquitin-conjugating enzyme]-L-cysteine + N(6)-ubiquitinyl-[acceptor protein]-L-lysine.. The protein operates within protein modification; protein ubiquitination. E3 ubiquitin-protein ligase that mediates the ubiquitination of atp6v0c and targets it to degradation via the ubiquitin-proteasome pathway. In Xenopus laevis (African clawed frog), this protein is E3 ubiquitin-protein ligase RNF182 (rnf182).